A 90-amino-acid chain; its full sequence is Exodeoxyribonuclease 7 small subunit (90 aa).

The disordered stretch occupies residues 62 to 90 (QDGQANPMSSQGHTAGEYPDDEAEEAEEA). Positions 64–74 (GQANPMSSQGH) are enriched in polar residues. The segment covering 79 to 90 (YPDDEAEEAEEA) has biased composition (acidic residues).

This sequence belongs to the XseB family. As to quaternary structure, heterooligomer composed of large and small subunits.

The protein localises to the cytoplasm. The catalysed reaction is Exonucleolytic cleavage in either 5'- to 3'- or 3'- to 5'-direction to yield nucleoside 5'-phosphates.. Bidirectionally degrades single-stranded DNA into large acid-insoluble oligonucleotides, which are then degraded further into small acid-soluble oligonucleotides. This is Exodeoxyribonuclease 7 small subunit from Desulfovibrio desulfuricans (strain ATCC 27774 / DSM 6949 / MB).